We begin with the raw amino-acid sequence, 86 residues long: Large ribosomal subunit protein bL27 (86 aa).

It belongs to the bacterial ribosomal protein bL27 family.

This is Large ribosomal subunit protein bL27 from Xanthomonas campestris pv. campestris (strain 8004).